Reading from the N-terminus, the 330-residue chain is GTPase Obg (330 aa).

In terms of domain architecture, Obg spans 1 to 159 (MNFIDEVKIY…MWIHLSLKLL (159 aa)). Residues 160–327 (SDVGLVGLPN…IVKLALKIIK (168 aa)) form the OBG-type G domain. Residues 166-173 (GLPNAGKS), 191-195 (FTTLV), 212-215 (DIPG), 279-282 (NKCD), and 308-310 (STY) contribute to the GTP site. Ser173 and Thr193 together coordinate Mg(2+).

The protein belongs to the TRAFAC class OBG-HflX-like GTPase superfamily. OBG GTPase family. In terms of assembly, monomer. Mg(2+) is required as a cofactor.

The protein resides in the cytoplasm. In terms of biological role, an essential GTPase which binds GTP, GDP and possibly (p)ppGpp with moderate affinity, with high nucleotide exchange rates and a fairly low GTP hydrolysis rate. Plays a role in control of the cell cycle, stress response, ribosome biogenesis and in those bacteria that undergo differentiation, in morphogenesis control. This chain is GTPase Obg, found in Rickettsia akari (strain Hartford).